A 196-amino-acid chain; its full sequence is Holliday junction branch migration complex subunit RuvA (196 aa).

A domain I region spans residues 1–63 (MLDFIKGEIV…EETHQLFGFI (63 aa)). A domain II region spans residues 64-142 (DKKERQLFTH…PDNIPSSDTI (79 aa)). The segment at 143–146 (ITNI) is flexible linker. The domain III stretch occupies residues 146-196 (ISSNITKEAITALITLGFSQSASQKVVNKIVSNNSSSTTIEQIIKKALKLL).

This sequence belongs to the RuvA family. Homotetramer. Forms an RuvA(8)-RuvB(12)-Holliday junction (HJ) complex. HJ DNA is sandwiched between 2 RuvA tetramers; dsDNA enters through RuvA and exits via RuvB. An RuvB hexamer assembles on each DNA strand where it exits the tetramer. Each RuvB hexamer is contacted by two RuvA subunits (via domain III) on 2 adjacent RuvB subunits; this complex drives branch migration. In the full resolvosome a probable DNA-RuvA(4)-RuvB(12)-RuvC(2) complex forms which resolves the HJ.

The protein localises to the cytoplasm. In terms of biological role, the RuvA-RuvB-RuvC complex processes Holliday junction (HJ) DNA during genetic recombination and DNA repair, while the RuvA-RuvB complex plays an important role in the rescue of blocked DNA replication forks via replication fork reversal (RFR). RuvA specifically binds to HJ cruciform DNA, conferring on it an open structure. The RuvB hexamer acts as an ATP-dependent pump, pulling dsDNA into and through the RuvAB complex. HJ branch migration allows RuvC to scan DNA until it finds its consensus sequence, where it cleaves and resolves the cruciform DNA. The polypeptide is Holliday junction branch migration complex subunit RuvA (Azobacteroides pseudotrichonymphae genomovar. CFP2).